A 69-amino-acid polypeptide reads, in one-letter code: ATP synthase F(0) complex subunit e, mitochondrial (69 aa).

At lysine 34 the chain carries N6-acetyllysine. A Phosphoserine modification is found at serine 66.

This sequence belongs to the ATPase e subunit family. As to quaternary structure, component of the ATP synthase complex composed at least of ATP5F1A/subunit alpha, ATP5F1B/subunit beta, ATP5MC1/subunit c (homooctomer), MT-ATP6/subunit a, MT-ATP8/subunit 8, ATP5ME/subunit e, ATP5MF/subunit f, ATP5MG/subunit g, ATP5MK/subunit k, ATP5MJ/subunit j, ATP5F1C/subunit gamma, ATP5F1D/subunit delta, ATP5F1E/subunit epsilon, ATP5PF/subunit F6, ATP5PB/subunit b, ATP5PD/subunit d, ATP5PO/subunit OSCP. ATP synthase complex consists of a soluble F(1) head domain (subunits alpha(3) and beta(3)) - the catalytic core - and a membrane F(0) domain - the membrane proton channel (subunits c, a, 8, e, f, g, k and j). These two domains are linked by a central stalk (subunits gamma, delta, and epsilon) rotating inside the F1 region and a stationary peripheral stalk (subunits F6, b, d, and OSCP).

It localises to the mitochondrion. The protein resides in the mitochondrion inner membrane. In terms of biological role, subunit e, of the mitochondrial membrane ATP synthase complex (F(1)F(0) ATP synthase or Complex V) that produces ATP from ADP in the presence of a proton gradient across the membrane which is generated by electron transport complexes of the respiratory chain. ATP synthase complex consist of a soluble F(1) head domain - the catalytic core - and a membrane F(1) domain - the membrane proton channel. These two domains are linked by a central stalk rotating inside the F(1) region and a stationary peripheral stalk. During catalysis, ATP synthesis in the catalytic domain of F(1) is coupled via a rotary mechanism of the central stalk subunits to proton translocation. In vivo, can only synthesize ATP although its ATP hydrolase activity can be activated artificially in vitro. Part of the complex F(0) domain. This Homo sapiens (Human) protein is ATP synthase F(0) complex subunit e, mitochondrial.